A 435-amino-acid polypeptide reads, in one-letter code: Probable alpha-galactosidase B (435 aa).

The N-terminal stretch at 1 to 18 is a signal peptide; it reads MLTSLSLTALALLPSANA. Cys41 and Cys73 are oxidised to a cystine. Asn81 carries N-linked (GlcNAc...) asparagine glycosylation. A disulfide bond links Cys123 and Cys153. Residue Asp151 is the Nucleophile of the active site. Asn158 and Asn176 each carry an N-linked (GlcNAc...) asparagine glycan. 221–225 contributes to the substrate binding site; it reads DWGQA. A glycan (N-linked (GlcNAc...) asparagine) is linked at Asn232. Asp243 acts as the Proton donor in catalysis. N-linked (GlcNAc...) asparagine glycosylation occurs at Asn378.

It belongs to the glycosyl hydrolase 27 family.

The protein resides in the secreted. The catalysed reaction is Hydrolysis of terminal, non-reducing alpha-D-galactose residues in alpha-D-galactosides, including galactose oligosaccharides, galactomannans and galactolipids.. Functionally, hydrolyzes a variety of simple alpha-D-galactoside as well as more complex molecules such as oligosaccharides and polysaccharides. The sequence is that of Probable alpha-galactosidase B (agl1) from Penicillium simplicissimum.